A 187-amino-acid polypeptide reads, in one-letter code: UPF0301 protein VP2612 (187 aa).

It belongs to the UPF0301 (AlgH) family.

This is UPF0301 protein VP2612 from Vibrio parahaemolyticus serotype O3:K6 (strain RIMD 2210633).